The chain runs to 264 residues: Thiazole synthase (264 aa).

Lys106 (schiff-base intermediate with DXP) is an active-site residue. Residues Gly167, 193 to 194 (AG), and 215 to 216 (NS) each bind 1-deoxy-D-xylulose 5-phosphate.

This sequence belongs to the ThiG family. In terms of assembly, homotetramer. Forms heterodimers with either ThiH or ThiS.

It localises to the cytoplasm. The catalysed reaction is [ThiS sulfur-carrier protein]-C-terminal-Gly-aminoethanethioate + 2-iminoacetate + 1-deoxy-D-xylulose 5-phosphate = [ThiS sulfur-carrier protein]-C-terminal Gly-Gly + 2-[(2R,5Z)-2-carboxy-4-methylthiazol-5(2H)-ylidene]ethyl phosphate + 2 H2O + H(+). It participates in cofactor biosynthesis; thiamine diphosphate biosynthesis. Catalyzes the rearrangement of 1-deoxy-D-xylulose 5-phosphate (DXP) to produce the thiazole phosphate moiety of thiamine. Sulfur is provided by the thiocarboxylate moiety of the carrier protein ThiS. In vitro, sulfur can be provided by H(2)S. In Prochlorococcus marinus (strain MIT 9301), this protein is Thiazole synthase.